Reading from the N-terminus, the 374-residue chain is 5-hydroxytryptamine receptor 1D (374 aa).

The Extracellular segment spans residues 1 to 35 (MSPPNQSLEGLPQEASNRSLNVTGAWDPEVLQALR). Asn5, Asn17, and Asn21 each carry an N-linked (GlcNAc...) asparagine glycan. Residues 36 to 61 (ISLVVVLSVITLATVLSNAFVLTTIL) traverse the membrane as a helical segment. Residues 62-72 (LTKKLHTPANY) lie on the Cytoplasmic side of the membrane. The chain crosses the membrane as a helical span at residues 73–94 (LIGSLATTDLLVSILVMPISIA). At 95 to 106 (YTTTRTWNFGQI) the chain is on the extracellular side. A helical transmembrane segment spans residues 107–131 (LCDIWVSSDITCCTASILHLCVIAL). Cys108 and Cys185 are joined by a disulfide. Residues Asp115 and Cys119 each contribute to the serotonin site. The DRY motif; important for ligand-induced conformation changes signature appears at 132-134 (DRY). The Cytoplasmic portion of the chain corresponds to 132–151 (DRYWAITDALEYSKRRTAGH). A helical membrane pass occupies residues 152 to 173 (AAAMIAAVWIISICISIPPLFW). Residues 174–191 (RQATAHEEMSDCLVNTSQ) are Extracellular-facing. Residues 192–215 (ISYTIYSTCGAFYIPSILLIILYG) form a helical membrane-spanning segment. The Cytoplasmic segment spans residues 216–297 (RIYVAARSRI…ISAARERKAT (82 aa)). The chain crosses the membrane as a helical span at residues 298–323 (KTLGIILGAFIICWLPFFVVSLVLPI). Ser318 lines the serotonin pocket. The Extracellular portion of the chain corresponds to 324 to 332 (CRDSCWIHP). Residues 333-356 (ALFDFFTWLGYLNSLINPVIYTVF) form a helical membrane-spanning segment. The short motif at 349–353 (NPVIY) is the NPxxY motif; important for ligand-induced conformation changes and signaling element. Residues 357-374 (NEDFRQAFQKVVHFRKIS) lie on the Cytoplasmic side of the membrane.

The protein belongs to the G-protein coupled receptor 1 family. Homodimer. Heterodimer with HTR1B. Detected in the motor column in spinal cord, and in several cranial motor nuclei, including nucleus ambiguous, oculomotoris, trochelaris and abducens. Detected in gamma motor neurons in the lumbar spinal cord. Detected in proprioceptive sensory neurons in dorsal root ganglia.

Its subcellular location is the cell membrane. Its function is as follows. G-protein coupled receptor for 5-hydroxytryptamine (serotonin). Also functions as a receptor for ergot alkaloid derivatives, various anxiolytic and antidepressant drugs and other psychoactive substances. Ligand binding causes a conformation change that triggers signaling via guanine nucleotide-binding proteins (G proteins) and modulates the activity of downstream effectors, such as adenylate cyclase. HTR1D is coupled to G(i)/G(o) G alpha proteins and mediates inhibitory neurotransmission by inhibiting adenylate cyclase activity. Regulates the release of 5-hydroxytryptamine in the brain, and thereby affects neural activity. May also play a role in regulating the release of other neurotransmitters. May play a role in vasoconstriction. The chain is 5-hydroxytryptamine receptor 1D (Htr1d) from Mus musculus (Mouse).